A 353-amino-acid chain; its full sequence is O-antigen chain mannosyltransferase RfbU (353 aa).

It belongs to the glycosyltransferase group 1 family. Glycosyltransferase 4 subfamily.

It carries out the reaction alpha-L-rhamnosyl-(1-&gt;3)-alpha-D-galactosyl-1-diphospho-di-trans,octa-cis-undecaprenol + GDP-alpha-D-mannose = alpha-D-Man-(1-&gt;4)-alpha-L-Rha-(1-&gt;3)-alpha-D-Gal-di-trans,octa-cis-undecaprenyl diphosphate + GDP + H(+). It participates in bacterial outer membrane biogenesis; LPS O-antigen biosynthesis. Functionally, mannosyltransferase involved in the biosynthesis of the repeat unit of the lipopolysaccharide (LPS) O-antigen region. Catalyzes the addition of a mannose to the rhamnosyl-galactosyl-undecaprenyl diphosphate intermediate. The chain is O-antigen chain mannosyltransferase RfbU from Salmonella typhimurium (strain LT2 / SGSC1412 / ATCC 700720).